The following is a 1107-amino-acid chain: Phospholipid-transporting ATPase 2 (1107 aa).

At 1 to 33 (MKRFVYINDDEASKELCCDNRISNRKYTLWNFL) the chain is on the cytoplasmic side. The helical transmembrane segment at 34-55 (PKNLWEQFSRFMNQYFLLIACL) threads the bilayer. Over 56-60 (QLWSL) the chain is Extracellular. A helical transmembrane segment spans residues 61–83 (ITPVNPASTWGPLIFIFAVSASK). Over 84-268 (EAWDDYHRYL…TAMDAMIDKL (185 aa)) the chain is Cytoplasmic. A helical transmembrane segment spans residues 269 to 290 (TGAIFVFQIVVVLVLGIAGNVW). Residues 291–315 (KDTEARKQWYVQYPEEAPWYELLVI) lie on the Extracellular side of the membrane. A helical membrane pass occupies residues 316-333 (PLRFELLCSIMIPISIKV). The Cytoplasmic portion of the chain corresponds to 334–807 (SLDLVKGLYA…HGRYSYNRTA (474 aa)). The active-site 4-aspartylphosphate intermediate is the Asp381. The Mg(2+) site is built by Asp752 and Asp756. A helical transmembrane segment spans residues 808-827 (FLSQYSFYKSLLICFIQIFF). Residues 828–841 (SFISGVSGTSLFNS) lie on the Extracellular side of the membrane. The chain crosses the membrane as a helical span at residues 842–860 (VSLMAYNVFYTSVPVLVSV). Residues 861–890 (IDKDLSEASVMQHPQILFYCQAGRLLNPST) are Cytoplasmic-facing. A helical membrane pass occupies residues 891–912 (FAGWFGRSLFHAIIVFVITIHA). Residues 913–919 (YAYEKSE) lie on the Extracellular side of the membrane. Residues 920–942 (MEELGMVALSGCIWLQAFVVAQE) form a helical membrane-spanning segment. At 943–948 (TNSFTV) the chain is on the cytoplasmic side. Residues 949–969 (LQHLSIWGNLVGFYAINFLFS) traverse the membrane as a helical segment. The Extracellular portion of the chain corresponds to 970–982 (AIPSSGMYTIMFR). A helical membrane pass occupies residues 983–1007 (LCSQPSYWITMFLIVGAGMGPIFAL). Residues 1008 to 1107 (KYFRYTYRPS…SGYTRNCKDN (100 aa)) lie on the Cytoplasmic side of the membrane. The segment at 1048–1075 (DLSPISITQPKNRSPVYEPLLSDSPNAT) is disordered. Residue Ser1050 is modified to Phosphoserine.

It belongs to the cation transport ATPase (P-type) (TC 3.A.3) family. Type IV subfamily. As to quaternary structure, interacts with ALIS1, ALIS3 and ALIS5 in a heterologous system.

The protein resides in the endoplasmic reticulum membrane. It localises to the prevacuolar compartment membrane. The enzyme catalyses ATP + H2O + phospholipidSide 1 = ADP + phosphate + phospholipidSide 2.. Functionally, involved in transport of phospholipids. Contributes to transmembrane flipping of lipids. Requires an interaction with a protein of the ALIS family for activity. Specific for phosphatidylserine and has no activity with lysolipid, phosphatidylcholine or phosphatidylethanolamine. This chain is Phospholipid-transporting ATPase 2, found in Arabidopsis thaliana (Mouse-ear cress).